The sequence spans 287 residues: Acetylglutamate kinase (287 aa).

Substrate is bound by residues 70-71 (GG), R92, and N184.

The protein belongs to the acetylglutamate kinase family. ArgB subfamily.

Its subcellular location is the cytoplasm. The enzyme catalyses N-acetyl-L-glutamate + ATP = N-acetyl-L-glutamyl 5-phosphate + ADP. It participates in amino-acid biosynthesis; L-arginine biosynthesis; N(2)-acetyl-L-ornithine from L-glutamate: step 2/4. Catalyzes the ATP-dependent phosphorylation of N-acetyl-L-glutamate. The chain is Acetylglutamate kinase from Roseobacter denitrificans (strain ATCC 33942 / OCh 114) (Erythrobacter sp. (strain OCh 114)).